Here is a 300-residue protein sequence, read N- to C-terminus: UDP-3-O-acyl-N-acetylglucosamine deacetylase (300 aa).

The Zn(2+) site is built by histidine 76, histidine 235, and aspartate 239. The active-site Proton donor is histidine 262.

Belongs to the LpxC family. Zn(2+) is required as a cofactor.

It catalyses the reaction a UDP-3-O-[(3R)-3-hydroxyacyl]-N-acetyl-alpha-D-glucosamine + H2O = a UDP-3-O-[(3R)-3-hydroxyacyl]-alpha-D-glucosamine + acetate. Its pathway is glycolipid biosynthesis; lipid IV(A) biosynthesis; lipid IV(A) from (3R)-3-hydroxytetradecanoyl-[acyl-carrier-protein] and UDP-N-acetyl-alpha-D-glucosamine: step 2/6. Functionally, catalyzes the hydrolysis of UDP-3-O-myristoyl-N-acetylglucosamine to form UDP-3-O-myristoylglucosamine and acetate, the committed step in lipid A biosynthesis. The polypeptide is UDP-3-O-acyl-N-acetylglucosamine deacetylase (Halorhodospira halophila (strain DSM 244 / SL1) (Ectothiorhodospira halophila (strain DSM 244 / SL1))).